The following is a 365-amino-acid chain: Sulfate/thiosulfate import ATP-binding protein CysA (365 aa).

An ABC transporter domain is found at 3–237; it reads IEIANIKKSF…PATRFVLEFM (235 aa). 35-42 provides a ligand contact to ATP; that stretch reads GPSGSGKT.

The protein belongs to the ABC transporter superfamily. Sulfate/tungstate importer (TC 3.A.1.6) family. In terms of assembly, the complex is composed of two ATP-binding proteins (CysA), two transmembrane proteins (CysT and CysW) and a solute-binding protein (CysP).

Its subcellular location is the cell inner membrane. The enzyme catalyses sulfate(out) + ATP + H2O = sulfate(in) + ADP + phosphate + H(+). It carries out the reaction thiosulfate(out) + ATP + H2O = thiosulfate(in) + ADP + phosphate + H(+). Functionally, part of the ABC transporter complex CysAWTP involved in sulfate/thiosulfate import. Responsible for energy coupling to the transport system. The protein is Sulfate/thiosulfate import ATP-binding protein CysA of Escherichia coli O157:H7.